Consider the following 418-residue polypeptide: Fumarylacetoacetase (418 aa).

Asp-127 is a Ca(2+) binding site. His-134 (proton acceptor) is an active-site residue. Residues Glu-200, Glu-202, and Asp-235 each contribute to the Ca(2+) site. Asp-235, Lys-255, and Thr-259 together coordinate Mg(2+).

This sequence belongs to the FAH family. It depends on Ca(2+) as a cofactor. Mg(2+) serves as cofactor. In terms of tissue distribution, highly expressed in the intestine and the hypodermis.

It carries out the reaction 4-fumarylacetoacetate + H2O = acetoacetate + fumarate + H(+). It functions in the pathway amino-acid degradation; L-phenylalanine degradation; acetoacetate and fumarate from L-phenylalanine: step 6/6. In terms of biological role, fumarylacetoacetase involved in the tyrosine degradation pathway. The polypeptide is Fumarylacetoacetase (Caenorhabditis elegans).